Reading from the N-terminus, the 408-residue chain is Elongation factor Tu, chloroplastic (408 aa).

One can recognise a tr-type G domain in the interval 10 to 213; that stretch reads KPHVNIGTIG…KVDEYIPTPE (204 aa). Positions 19–26 are G1; the sequence is GHVDHGKT. A GTP-binding site is contributed by 19–26; the sequence is GHVDHGKT. Thr26 contributes to the Mg(2+) binding site. A G2 region spans residues 59–63; sequence GITIN. Residues 80–83 form a G3 region; it reads DCPG. Residues 80–84 and 135–138 each bind GTP; these read DCPGH and NKAD. The G4 stretch occupies residues 135 to 138; it reads NKAD. The G5 stretch occupies residues 173-175; sequence SAL.

Belongs to the TRAFAC class translation factor GTPase superfamily. Classic translation factor GTPase family. EF-Tu/EF-1A subfamily.

It is found in the plastid. It localises to the chloroplast. It catalyses the reaction GTP + H2O = GDP + phosphate + H(+). Its function is as follows. GTP hydrolase that promotes the GTP-dependent binding of aminoacyl-tRNA to the A-site of ribosomes during protein biosynthesis. This is Elongation factor Tu, chloroplastic (tufA) from Guillardia theta (Cryptophyte).